The following is a 116-amino-acid chain: Putative antiporter subunit mnhC2 (116 aa).

3 consecutive transmembrane segments (helical) span residues 3–23, 28–48, and 72–92; these read LILLLVIGFLVFIGTYMILSL, IVIGISIYTHAGNLIIMSMGH, and AIVLTAIVIGFAMTAFLLVLV.

Belongs to the CPA3 antiporters (TC 2.A.63) subunit C family. As to quaternary structure, may form a heterooligomeric complex that consists of seven subunits: mnhA2, mnhB2, mnhC2, mnhD2, mnhE2, mnhF2 and mnhG2.

It is found in the cell membrane. In Staphylococcus haemolyticus (strain JCSC1435), this protein is Putative antiporter subunit mnhC2 (mnhC2).